Consider the following 93-residue polypeptide: uncharacterized protein (93 aa).

This sequence to E.coli YeaC.

This is an uncharacterized protein from Pseudoalteromonas haloplanktis (Alteromonas haloplanktis).